Consider the following 336-residue polypeptide: DNA-directed RNA polymerase subunit alpha (336 aa).

The interval 1–232 (MIQKNWQELI…DQLGVFVNFD (232 aa)) is alpha N-terminal domain (alpha-NTD). Residues 248–336 (FNPALLKKVD…DLAKRYEDQY (89 aa)) form an alpha C-terminal domain (alpha-CTD) region.

The protein belongs to the RNA polymerase alpha chain family. In terms of assembly, homodimer. The RNAP catalytic core consists of 2 alpha, 1 beta, 1 beta' and 1 omega subunit. When a sigma factor is associated with the core the holoenzyme is formed, which can initiate transcription.

The catalysed reaction is RNA(n) + a ribonucleoside 5'-triphosphate = RNA(n+1) + diphosphate. Functionally, DNA-dependent RNA polymerase catalyzes the transcription of DNA into RNA using the four ribonucleoside triphosphates as substrates. The polypeptide is DNA-directed RNA polymerase subunit alpha (Rhizobium etli (strain CIAT 652)).